We begin with the raw amino-acid sequence, 182 residues long: MSGRTVPHAHPATAEYEFANPSRLGEQRFGEGLLPEEILTPTLYHGYYVRPRAARAGEGARAGASELRLSEGKFQAFLDVSHFTPDEVTVRTVDNLLEVSARHPQRLDRHGFVSREFCRTYVLPADVDPWRVRAALSHDGILNLEAPRGGRHLDTEVNEVYISLLPAPPDPEEEEEIARVEP.

The 109-residue stretch at 55 to 163 (RAGEGARAGA…DTEVNEVYIS (109 aa)) folds into the sHSP domain.

This sequence belongs to the small heat shock protein (HSP20) family. In terms of assembly, interacts with DMPK; may enhance its kinase activity.

Its subcellular location is the cytoplasm. The protein localises to the nucleus. Functionally, may regulate the kinase DMPK. The polypeptide is Heat shock protein beta-2 (Hspb2) (Mus musculus (Mouse)).